A 75-amino-acid polypeptide reads, in one-letter code: Phytosulfokines (75 aa).

The first 22 residues, 1-22 (MSSKAITLLLIALLFSLSLAQA), serve as a signal peptide directing secretion. The propeptide occupies 23-66 (ARPLQPADSTKSVHVIPEKVHDEACEGVGEEECLMRRTLTAHVD). A sulfotyrosine mark is found at tyrosine 67 and tyrosine 69. Positions 72–75 (DHNP) are excised as a propeptide.

Belongs to the phytosulfokine family. Post-translationally, sulfation is important for activity and for the binding to a putative membrane receptor. Deletion of the sulfate groups of Tyr-67 and Tyr-69 resulted in compounds with respectively 0.6% and 4% of the activity. PSK-alpha is produced by endopeptidase digestion. PSK-beta is produced from PSK-alpha by exopeptidase digestion.

It localises to the secreted. Promotes plant cell differentiation, organogenesis and somatic embryogenesis as well as cell proliferation. In Asparagus officinalis (Garden asparagus), this protein is Phytosulfokines (PSK).